A 1132-amino-acid chain; its full sequence is MQMVPSLPPASECAGEEKRVGTRTVFVGNHPVSETEAYIAQRFCDNRIVSSKYTLWNFLPKNLFEQFRRIANFYFLIIFLVQVTVDTPTSPVTSGLPLFFVITVTAIKQGYEDCLRHRADNEVNKSTVYIIENAKRVRKESEKIKVGDVVEVQADETFPCDLILLSSCTTDGTCYVTTASLDGESNCKTHYAVRDTIALCTAESIDTLRAAIECEQPQPDLYKFVGRINIYSNSLEAVARSLGPENLLLKGATLKNTEKIYGVAVYTGMETKMALNYQGKSQKRSAVEKSINAFLIVYLFILLTKAAVCTTLKYVWQSTPYNDEPWYNQKTQKERETLKVLKMFTDFLSFMVLFNFIIPVSMYVTVEMQKFLGSFFISWDKDFYDEEINEGALVNTSDLNEELGQVDYVFTDKTGTLTENSMEFIECCIDGHKYKGVTQEVDGLSQTDGTLTYFDKVDKNREELFLRALCLCHTVEIKTNDAVDGATESAELTYISSSPDEIALVKGAKRYGFTFLGNRNGYMRVENQRKEIEEYELLHTLNFDAVRRRMSVIVKTQEGDILLFCKGADSAVFPRVQNHEIELTKVHVERNAMDGYRTLCVAFKEIAPDDYERINRQLIEAKMALQDREEKMEKVFDDIETNMNLIGATAVEDKLQDQAAETIEALHAAGLKVWVLTGDKMETAKSTCYACRLFQTNTELLELTTKTIEESERKEDRLHELLIEYRKKLLHEFPKSTRSFKKAWTEHQEYGLIIDGSTLSLILNSSQDSSSNNYKSIFLQICMKCTAVLCCRMAPLQKAQIVRMVKNLKGSPITLSIGDGANDVSMILESHVGIGIKGKEGRQAARNSDYSVPKFKHLKKLLLAHGHLYYVRIAHLVQYFFYKNLCFILPQFLYQFFCGFSQQPLYDAAYLTMYNICFTSLPILAYSLLEQHINIDTLTSDPRLYMKISGNAMLQLGPFLYWTFLAAFEGTVFFFGTYFLFQTASLEENGKVYGNWTFGTIVFTVLVFTVTLKLALDTRFWTWINHFVIWGSLAFYVFFSFFWGGIIWPFLKQQRMYFVFAQMLSSVSTWLAIILLIFISLFPEILLIVLKNVRRRSARRNLSCRRASDSLSARPSVRPLLLRTFSDESNVL.

At 1 to 66 the chain is on the cytoplasmic side; the sequence is MQMVPSLPPA…NFLPKNLFEQ (66 aa). Residues 67–85 form a helical membrane-spanning segment; that stretch reads FRRIANFYFLIIFLVQVTV. Position 86 (D86) is a topological domain, extracellular. The chain crosses the membrane as a helical span at residues 87-107; that stretch reads TPTSPVTSGLPLFFVITVTAI. Residues 108 to 290 lie on the Cytoplasmic side of the membrane; that stretch reads KQGYEDCLRH…SQKRSAVEKS (183 aa). A helical membrane pass occupies residues 291–311; the sequence is INAFLIVYLFILLTKAAVCTT. The Extracellular portion of the chain corresponds to 312–346; it reads LKYVWQSTPYNDEPWYNQKTQKERETLKVLKMFTD. The helical transmembrane segment at 347 to 367 threads the bilayer; sequence FLSFMVLFNFIIPVSMYVTVE. Topologically, residues 368 to 879 are cytoplasmic; sequence MQKFLGSFFI…YVRIAHLVQY (512 aa). The active-site 4-aspartylphosphate intermediate is the D412. Positions 412, 413, and 414 each coordinate ATP. D412 is a Mg(2+) binding site. T414 is a Mg(2+) binding site. S445 is modified (phosphoserine). ATP-binding residues include E501, F543, K566, R597, T677, G678, D679, R792, and K798. Mg(2+) is bound at residue D819. Positions 822 and 823 each coordinate ATP. Position 823 (D823) interacts with Mg(2+). A helical membrane pass occupies residues 880 to 900; that stretch reads FFYKNLCFILPQFLYQFFCGF. Over 901–908 the chain is Extracellular; the sequence is SQQPLYDA. Residues 909-929 traverse the membrane as a helical segment; the sequence is AYLTMYNICFTSLPILAYSLL. Topologically, residues 930–955 are cytoplasmic; the sequence is EQHINIDTLTSDPRLYMKISGNAMLQ. A helical membrane pass occupies residues 956 to 976; the sequence is LGPFLYWTFLAAFEGTVFFFG. The Extracellular portion of the chain corresponds to 977–995; the sequence is TYFLFQTASLEENGKVYGN. The helical transmembrane segment at 996–1016 threads the bilayer; it reads WTFGTIVFTVLVFTVTLKLAL. At 1017-1026 the chain is on the cytoplasmic side; the sequence is DTRFWTWINH. The chain crosses the membrane as a helical span at residues 1027–1047; sequence FVIWGSLAFYVFFSFFWGGII. Residues 1048–1069 are Extracellular-facing; sequence WPFLKQQRMYFVFAQMLSSVST. The chain crosses the membrane as a helical span at residues 1070–1090; the sequence is WLAIILLIFISLFPEILLIVL. Topologically, residues 1091-1132 are cytoplasmic; the sequence is KNVRRRSARRNLSCRRASDSLSARPSVRPLLLRTFSDESNVL. Residues S1108, S1116, and S1126 each carry the phosphoserine modification. The Di-leucine motif motif lies at 1116–1121; sequence SVRPLL.

Belongs to the cation transport ATPase (P-type) (TC 3.A.3) family. Type IV subfamily. In terms of assembly, component of a P4-ATPase flippase complex which consists of a catalytic alpha subunit ATP11C and an accessory beta subunit TMEM30A. Requires Mg(2+) as cofactor. Post-translationally, proteolytically cleaved by CASP3, CASP6 and CASP7. In terms of processing, phosphorylated at Ser-1116 likely by PRKCA; this creates a functional di-leucine motif that is sufficient for endocytosis. As to expression, widely expressed.

The protein resides in the cell membrane. It is found in the endoplasmic reticulum membrane. It localises to the early endosome membrane. The protein localises to the recycling endosome membrane. The catalysed reaction is ATP + H2O + phospholipidSide 1 = ADP + phosphate + phospholipidSide 2.. It catalyses the reaction a 1,2-diacyl-sn-glycero-3-phospho-L-serine(out) + ATP + H2O = a 1,2-diacyl-sn-glycero-3-phospho-L-serine(in) + ADP + phosphate + H(+). The enzyme catalyses a 1,2-diacyl-sn-glycero-3-phosphoethanolamine(out) + ATP + H2O = a 1,2-diacyl-sn-glycero-3-phosphoethanolamine(in) + ADP + phosphate + H(+). Its activity is regulated as follows. The flippase activity is inactivated by caspase-mediated cleavage in apoptotic cells, allowing for PS exposure on the cell surface and engulfment of apoptotic cells by macrophages. The ATPase activity is up-regulated by aminophospholipids PS and PE and down-regulated by Increasing intracellular Ca2+ levels. Functionally, catalytic component of a P4-ATPase flippase complex which catalyzes the hydrolysis of ATP coupled to the transport of aminophospholipids, phosphatidylserines (PS) and phosphatidylethanolamines (PE), from the outer to the inner leaflet of the plasma membrane. Major PS-flippase in immune cell subsets. In erythrocyte plasma membrane, it is required to maintain PS in the inner leaflet preventing its exposure on the surface. This asymmetric distribution is critical for the survival of erythrocytes in circulation since externalized PS is a phagocytic signal for erythrocyte clearance by splenic macrophages. Required for B cell differentiation past the pro-B cell stage. Seems to mediate PS flipping in pro-B cells. May be involved in the transport of cholestatic bile acids. This is Phospholipid-transporting ATPase IG from Homo sapiens (Human).